A 249-amino-acid chain; its full sequence is Flavin-dependent thymidylate synthase (249 aa).

The ThyX domain occupies 7–235 (LDVQLIAATA…PVLFDDFHIT (229 aa)). DUMP contacts are provided by residues 94–97 (ELVR), 105–109 (QLSQR), and Arg174. FAD contacts are provided by residues 97–99 (RHR) and Gln105. A ThyX motif motif is present at residues 97-107 (RHRHFSFSQLS). FAD is bound by residues 190–192 (NYR) and His196. Arg201 provides a ligand contact to dUMP. Arg201 acts as the Involved in ionization of N3 of dUMP, leading to its activation in catalysis.

Belongs to the thymidylate synthase ThyX family. As to quaternary structure, homotetramer. Requires FAD as cofactor.

The catalysed reaction is dUMP + (6R)-5,10-methylene-5,6,7,8-tetrahydrofolate + NADPH + H(+) = dTMP + (6S)-5,6,7,8-tetrahydrofolate + NADP(+). Its pathway is pyrimidine metabolism; dTTP biosynthesis. Functionally, catalyzes the reductive methylation of 2'-deoxyuridine-5'-monophosphate (dUMP) to 2'-deoxythymidine-5'-monophosphate (dTMP) while utilizing 5,10-methylenetetrahydrofolate (mTHF) as the methyl donor, and NADPH and FADH(2) as the reductant. This Corynebacterium aurimucosum (strain ATCC 700975 / DSM 44827 / CIP 107346 / CN-1) (Corynebacterium nigricans) protein is Flavin-dependent thymidylate synthase.